We begin with the raw amino-acid sequence, 326 residues long: Olfactory receptor 8A1 (326 aa).

Residues 1–45 (MGFLSPMHPCRPPTQRRMAAGNHSTVTEFILKGLTKRADLQLPLF) are Extracellular-facing. The N-linked (GlcNAc...) asparagine glycan is linked to Asn-22. A helical membrane pass occupies residues 46-66 (LLFLGIYLVTIVGNLGMITLI). The Cytoplasmic portion of the chain corresponds to 67 to 77 (CLNSQLHTPMY). A helical membrane pass occupies residues 78 to 100 (YFLSNLSLMDLCYSSVITPKMLV). At 101–116 (NFVSEKNIISYAGCMS) the chain is on the extracellular side. A disulfide bridge links Cys-114 with Cys-195. Residues 117-137 (QLYFFLVFVIAECYMLTVMAY) traverse the membrane as a helical segment. The Cytoplasmic portion of the chain corresponds to 138 to 150 (DRYVAICHPLLYN). Residues 151–171 (IIMSHHTCLLLVAVVYAIGLI) traverse the membrane as a helical segment. Residues 172-222 (GSTIETGLMLKLPYCEHLISHYFCDILPLMKLSCSSTYDVEMTVFFSAGFN) are Extracellular-facing. A helical membrane pass occupies residues 223–243 (IIVTSLTVLVSYTFILSSILG). Residues 244-260 (ISTTEGRSKAFSTCSSH) lie on the Cytoplasmic side of the membrane. The chain crosses the membrane as a helical span at residues 261–281 (LAAVGMFYGSTAFMYLKPSTI). Topologically, residues 282 to 287 (SSLTQE) are extracellular. Residues 288–308 (NVASVFYTTVIPMLNPLIYSL) traverse the membrane as a helical segment. Residues 309 to 326 (RNKEVKAAVQKTLRGKLF) lie on the Cytoplasmic side of the membrane.

This sequence belongs to the G-protein coupled receptor 1 family.

Its subcellular location is the cell membrane. Its function is as follows. Odorant receptor. The sequence is that of Olfactory receptor 8A1 (OR8A1) from Homo sapiens (Human).